We begin with the raw amino-acid sequence, 389 residues long: Vacuolar protein sorting-associated protein vts1 (389 aa).

The tract at residues 149 to 335 is disordered; that stretch reads NPQRKAKTPS…RPSQPTKASP (187 aa). Polar residues-rich tracts occupy residues 156–177, 184–219, and 227–282; these read TPSNHATEELQQSSTNSTTLPT, TNASASHETSFALPTTSPAASLSISPTKSAAVSSEP, and SLSS…PESK. A compositionally biased stretch (low complexity) spans 294-306; the sequence is TSITTTSTSIDPS. A compositionally biased stretch (polar residues) spans 308–334; sequence AFSSKSTLATTRTNAPLSRPSQPTKAS.

Belongs to the VTA1 family. As to quaternary structure, homodimer (in cytoplasm).

The protein resides in the cytoplasm. Its subcellular location is the endosome membrane. Has a role in the formation of the multivesicular body (MVB). Required for the sorting of lipids to form intralumenal vesicles and for fluid-phase transport to the vacuole. Required for sorting several plasma membrane proteins into the MVB. This chain is Vacuolar protein sorting-associated protein vts1 (vts1), found in Schizosaccharomyces pombe (strain 972 / ATCC 24843) (Fission yeast).